Consider the following 68-residue polypeptide: Small ribosomal subunit protein bS21 (68 aa).

It belongs to the bacterial ribosomal protein bS21 family.

In Jannaschia sp. (strain CCS1), this protein is Small ribosomal subunit protein bS21.